The sequence spans 352 residues: Ketoisovalerate oxidoreductase subunit VorB (352 aa).

As to quaternary structure, heterotrimer of the VorA, VorB and VorC subunits.

It carries out the reaction 3-methyl-2-oxobutanoate + 2 oxidized [2Fe-2S]-[ferredoxin] + CoA = 2-methylpropanoyl-CoA + 2 reduced [2Fe-2S]-[ferredoxin] + CO2 + H(+). In Methanothermobacter marburgensis (strain ATCC BAA-927 / DSM 2133 / JCM 14651 / NBRC 100331 / OCM 82 / Marburg) (Methanobacterium thermoautotrophicum), this protein is Ketoisovalerate oxidoreductase subunit VorB (vorB).